A 363-amino-acid chain; its full sequence is Adenosine deaminase (363 aa).

Zn(2+) is bound by residues histidine 42 and histidine 44. A purine D-ribonucleoside is bound by residues 44–46, aspartate 172, and glycine 201; that span reads HLD. Residues 170–184 are gating helix loop; regulates binding affinity for substrates and thus substrate selectivity; that stretch reads IGDTGHRAADIKASA. Histidine 226 contacts Zn(2+). Positions 229, 253, and 310 each coordinate a purine D-ribonucleoside. Position 310 (aspartate 310) interacts with Zn(2+).

The protein belongs to the metallo-dependent hydrolases superfamily. Adenosine and AMP deaminases family. Zn(2+) is required as a cofactor.

It carries out the reaction adenosine + H2O + H(+) = inosine + NH4(+). The catalysed reaction is S-methyl-5'-thioadenosine + H2O + H(+) = S-methyl-5'-thioinosine + NH4(+). The protein operates within purine metabolism; purine nucleoside salvage. With respect to regulation, inhibited by coformycin and methylthiocoformycin (MT-coformycin). Catalyzes the hydrolytic deamination of adenosine to produce inosine. Unlike mammalian adenosine deaminases, also catalyzes the deamination of 5'-methylthioadenosine (MTA), a by-product of polyamine biosynthesis, to produce 5'-methylthioinosine (MTI). Plays an essential role in the purine salvage pathway which allows the parasite to use host cell purines for the synthesis of nucleic acids. The protein is Adenosine deaminase of Plasmodium knowlesi.